Here is a 27-residue protein sequence, read N- to C-terminus: 23S rRNA methylase leader peptide (27 aa).

This peptide is involved in the control mechanism of the synthesis of the erythromycin resistance protein. The chain is 23S rRNA methylase leader peptide (ermC) from Enterococcus faecalis (Streptococcus faecalis).